A 392-amino-acid polypeptide reads, in one-letter code: Chaperone protein DnaJ (392 aa).

Positions 5-75 (DYYEVLGIDK…QKKQQYDQFG (71 aa)) constitute a J domain. The CR-type zinc finger occupies 148–229 (GVEKTIKYKR…CHGTGTAKET (82 aa)). The Zn(2+) site is built by C161, C164, C177, C180, C203, C206, C217, and C220. CXXCXGXG motif repeat units follow at residues 161-168 (CENCHGTG), 177-184 (CPTCNGQG), 203-210 (CPDCHGTG), and 217-224 (CKHCHGTG).

It belongs to the DnaJ family. In terms of assembly, homodimer. The cofactor is Zn(2+).

The protein resides in the cytoplasm. Its function is as follows. Participates actively in the response to hyperosmotic and heat shock by preventing the aggregation of stress-denatured proteins and by disaggregating proteins, also in an autonomous, DnaK-independent fashion. Unfolded proteins bind initially to DnaJ; upon interaction with the DnaJ-bound protein, DnaK hydrolyzes its bound ATP, resulting in the formation of a stable complex. GrpE releases ADP from DnaK; ATP binding to DnaK triggers the release of the substrate protein, thus completing the reaction cycle. Several rounds of ATP-dependent interactions between DnaJ, DnaK and GrpE are required for fully efficient folding. Also involved, together with DnaK and GrpE, in the DNA replication of plasmids through activation of initiation proteins. This is Chaperone protein DnaJ from Fusobacterium nucleatum subsp. nucleatum (strain ATCC 25586 / DSM 15643 / BCRC 10681 / CIP 101130 / JCM 8532 / KCTC 2640 / LMG 13131 / VPI 4355).